The chain runs to 211 residues: tRNA (guanine-N(7)-)-methyltransferase (211 aa).

Glutamate 44, aspartate 69, aspartate 96, and aspartate 118 together coordinate S-adenosyl-L-methionine. Aspartate 118 is an active-site residue. Lysine 122 contacts substrate. The interval 124–129 is interaction with RNA; sequence KHEKRR. Residues aspartate 154 and 191 to 194 each bind substrate; that span reads TEYE.

It belongs to the class I-like SAM-binding methyltransferase superfamily. TrmB family.

The catalysed reaction is guanosine(46) in tRNA + S-adenosyl-L-methionine = N(7)-methylguanosine(46) in tRNA + S-adenosyl-L-homocysteine. The protein operates within tRNA modification; N(7)-methylguanine-tRNA biosynthesis. Catalyzes the formation of N(7)-methylguanine at position 46 (m7G46) in tRNA. This Streptococcus uberis (strain ATCC BAA-854 / 0140J) protein is tRNA (guanine-N(7)-)-methyltransferase.